A 45-amino-acid polypeptide reads, in one-letter code: Ribosome-inactivating protein TAP-29 (45 aa).

Belongs to the ribosome-inactivating protein family. Type 1 RIP subfamily.

The enzyme catalyses Endohydrolysis of the N-glycosidic bond at one specific adenosine on the 28S rRNA.. Capable of inhibiting HIV-1 infection and replication. It inactivates eukaryotic 60S ribosomal subunits. This chain is Ribosome-inactivating protein TAP-29, found in Trichosanthes kirilowii (Chinese snake gourd).